Reading from the N-terminus, the 1243-residue chain is Protein MMS22-like (1243 aa).

This sequence belongs to the MMS22 family. MMS22L subfamily. As to quaternary structure, component of the MMS22L-TONSL complex.

The protein resides in the nucleus. It localises to the chromosome. In terms of biological role, component of the MMS22L-TONSL complex, a complex that promotes homologous recombination-mediated repair of double-strand breaks (DSBs) at stalled or collapsed replication forks. The MMS22L-TONSL complex is required to maintain genome integrity during DNA replication. It mediates the assembly of RAD51 filaments on single-stranded DNA (ssDNA): the MMS22L-TONSL complex is recruited to DSBs following histone replacement by histone chaperones and eviction of the replication protein A complex (RPA/RP-A) from DSBs. Following recruitment to DSBs, the TONSL-MMS22L complex promotes recruitment of RAD51 filaments and subsequent homologous recombination. Within the complex, MMS22L acts by binding ssDNA. The protein is Protein MMS22-like (MMS22L) of Gallus gallus (Chicken).